We begin with the raw amino-acid sequence, 1534 residues long: Ribosome-binding protein 1 (1534 aa).

Topologically, residues 1-7 (MDIYDTQ) are lumenal. Residues 8-28 (TLGVMVFGGFMVVSAIGIFLV) form a helical membrane-spanning segment. Topologically, residues 29–1534 (STFSMKETSY…DSSSKEGTSV (1506 aa)) are cytoplasmic. Disordered regions lie at residues 45–91 (QRKE…PAPN) and 125–152 (PAMP…VEPA). Residues 52 to 63 (THHQKVEKKKKE) show a composition bias toward basic residues. Basic and acidic residues predominate over residues 64–88 (KTVEKKGKTKKKEEKPNGKIPDHEP). Positions 125 to 135 (PAMPQEKLAPS) are enriched in low complexity. Lysine 148 participates in a covalent cross-link: Glycyl lysine isopeptide (Lys-Gly) (interchain with G-Cter in SUMO2). Serine 159 and serine 165 each carry phosphoserine. Disordered regions lie at residues 173–780 (APKE…PLYL), 968–987 (KELV…RKAL), and 1021–1082 (RELC…RAEN). Residues 175-194 (KEVPMVVVPPVGAKAGTPAT) show a composition bias toward low complexity. Tandem repeats lie at residues 197 to 206 (AQGKKAEGAQ), 207 to 216 (NQSRKAEGAP), 217 to 226 (NQGKKAEGAL), 227 to 236 (NQGKKAEGAQ), 237 to 246 (NQGKKVEVAP), 247 to 256 (NQGKKAEGGQ), 257 to 266 (NQGKKVEGAQ), 267 to 276 (NQGKKAEGTP), 277 to 286 (NQGKKAEGAP), 287 to 296 (NQGKKTDGAP), 297 to 306 (NQGKKSEGAP), 307 to 316 (NQGKKAEGAQ), 317 to 326 (NQGKKVEVAP), 327 to 336 (NQGKKAEGGQ), 337 to 346 (NQGKKVEGAQ), 347 to 356 (NQGKKAEGTP), 357 to 366 (NQGKKAEGAP), 367 to 376 (NQGKKTDGAP), 377 to 386 (NQGKKSEGAP), 387 to 396 (NQGKKVEGAQ), 397 to 406 (NQGKKVEGVQ), 407 to 416 (NQGKKAEGAQ), 417 to 426 (NQGKKAEGTS), 427 to 436 (SQGRKEEGTP), 437 to 446 (NLGKKAEGSP), 447 to 456 (NQGKKVEVVQ), 457 to 466 (NQSKKVEGAP), 467 to 476 (NQGKKAEGSQ), 477 to 486 (NQGKKTEGAS), 487 to 496 (NQGKKVDGAQ), 497 to 506 (NQGKKAEGAP), 507 to 516 (NQGKKVEGAQ), 517 to 526 (NQGKKAEGTP), 527 to 536 (NQGKKAEGAQ), 537 to 546 (NQGKKAEGAP), 547 to 556 (NQGKKAEGAP), 557 to 566 (NQGKKAEGAP), 567 to 576 (NQGKKAEGAP), 577 to 586 (NQGKKAEAAP), 587 to 596 (NQGKKAEGAP), 597 to 606 (NQGKKAEGAP), 607 to 616 (NQGKKAEAAP), 617 to 626 (NQGKKAEGAP), 627 to 636 (NQGKKAEGAP), 637 to 646 (NQGKKAEGAP), 647 to 656 (NQGKKAEGAQ), 657 to 666 (NQGKKAEGAP), 667 to 676 (NQGKKADLVA), 677 to 686 (NQGTKAEGVA), 687 to 696 (GQGKKAEGAP), 697 to 706 (NQGKKGEGTP), 707 to 716 (NQGKKSEGSP), 717 to 726 (NQGKKVDASA), and 727 to 736 (NQSKRAESAP). A 54 X 10 AA tandem repeats of [NASG]-[QL]-[GS]-[KRT]-[KR]-[AVTSEG]-[ED]-[AGVLS]-[ATGSV]-[PQLSA] region spans residues 197 to 736 (AQGKKAEGAQ…NQSKRAESAP (540 aa)). Threonine 275 is modified (phosphothreonine). The span at 395–428 (AQNQGKKVEGVQNQGKKAEGAQNQGKKAEGTSSQ) shows a compositional bias: polar residues. The span at 474-499 (GSQNQGKKTEGASNQGKKVDGAQNQG) shows a compositional bias: polar residues. The segment covering 705 to 718 (TPNQGKKSEGSPNQ) has biased composition (polar residues). Serine 715 is modified (phosphoserine). Phosphoserine is present on serine 747. Lysine 752 is covalently cross-linked (Glycyl lysine isopeptide (Lys-Gly) (interchain with G-Cter in SUMO1)). At serine 1032 the chain carries Phosphoserine. A compositionally biased stretch (basic and acidic residues) spans 1059-1080 (AEVKSKSEELSGLHGQLKEARA). Lysine 1064 carries the post-translational modification N6-acetyllysine. Phosphoserine occurs at positions 1091 and 1110. Disordered regions lie at residues 1224-1251 (ELLK…ETQN), 1391-1416 (KSHV…VELK), and 1509-1534 (ERDT…GTSV). The segment covering 1509 to 1528 (ERDTVKKLQEQLDKTDDSSS) has biased composition (basic and acidic residues).

It is found in the endoplasmic reticulum membrane. Acts as a ribosome receptor and mediates interaction between the ribosome and the endoplasmic reticulum membrane. This is Ribosome-binding protein 1 (RRBP1) from Canis lupus familiaris (Dog).